The chain runs to 419 residues: GTPase Obg (419 aa).

Residues 1 to 158 (MFVDQARIFV…KWIRLELKLL (158 aa)) form the Obg domain. One can recognise an OBG-type G domain in the interval 159–327 (ADVGLVGFPN…LMGKTYALLQ (169 aa)). GTP is bound by residues 165–172 (GFPNAGKS), 190–194 (FTTLV), 212–215 (DIPG), 282–285 (NKMD), and 308–310 (SAV). Positions 172 and 192 each coordinate Mg(2+). The OCT domain maps to 342-419 (RRFEEELPFK…IKDFEFEFTE (78 aa)).

It belongs to the TRAFAC class OBG-HflX-like GTPase superfamily. OBG GTPase family. In terms of assembly, monomer. Mg(2+) serves as cofactor.

It localises to the cytoplasm. Its function is as follows. An essential GTPase which binds GTP, GDP and possibly (p)ppGpp with moderate affinity, with high nucleotide exchange rates and a fairly low GTP hydrolysis rate. Plays a role in control of the cell cycle, stress response, ribosome biogenesis and in those bacteria that undergo differentiation, in morphogenesis control. This chain is GTPase Obg, found in Syntrophomonas wolfei subsp. wolfei (strain DSM 2245B / Goettingen).